The sequence spans 493 residues: 3-octaprenyl-4-hydroxybenzoate carboxy-lyase (493 aa).

N172 contacts Mn(2+). Prenylated FMN contacts are provided by residues 175 to 177 (IYR), 189 to 191 (RWL), and 194 to 195 (RG). E238 contacts Mn(2+). The Proton donor role is filled by D287.

Belongs to the UbiD family. In terms of assembly, homohexamer. The cofactor is prenylated FMN. Requires Mn(2+) as cofactor.

It is found in the cell membrane. It catalyses the reaction a 4-hydroxy-3-(all-trans-polyprenyl)benzoate + H(+) = a 2-(all-trans-polyprenyl)phenol + CO2. Its pathway is cofactor biosynthesis; ubiquinone biosynthesis. Functionally, catalyzes the decarboxylation of 3-octaprenyl-4-hydroxy benzoate to 2-octaprenylphenol, an intermediate step in ubiquinone biosynthesis. This Shewanella woodyi (strain ATCC 51908 / MS32) protein is 3-octaprenyl-4-hydroxybenzoate carboxy-lyase.